The sequence spans 174 residues: Small ribosomal subunit protein uS5 (174 aa).

In terms of domain architecture, S5 DRBM spans 19 to 82 (LREKMVAINR…DEARRKLKKI (64 aa)).

It belongs to the universal ribosomal protein uS5 family. In terms of assembly, part of the 30S ribosomal subunit. Contacts proteins S4 and S8.

With S4 and S12 plays an important role in translational accuracy. Its function is as follows. Located at the back of the 30S subunit body where it stabilizes the conformation of the head with respect to the body. This is Small ribosomal subunit protein uS5 from Aromatoleum aromaticum (strain DSM 19018 / LMG 30748 / EbN1) (Azoarcus sp. (strain EbN1)).